The sequence spans 1315 residues: ESX secretion system protein EccC (1315 aa).

Positions 1–11 (MSTVLVRRKER) are enriched in basic residues. The disordered stretch occupies residues 1 to 21 (MSTVLVRRKERRQPPQMPRGE). Over 1–40 (MSTVLVRRKERRQPPQMPRGEILLESPPELPEVVTNSFQN) the chain is Cytoplasmic. The chain crosses the membrane as a helical span at residues 41–61 (VLMYLPMAAGSAAMVFTFLNH). The Extracellular portion of the chain corresponds to 62-64 (RNT). Residues 65-85 (LQLVAGGMFALSMFGMMFGQL) traverse the membrane as a helical segment. Residues 86 to 1315 (SQQSGERKTK…RLIQTAYRES (1230 aa)) lie on the Cytoplasmic side of the membrane. FtsK domains lie at 456–656 (GRPL…MESR) and 813–1004 (RDPY…YESE). An ATP-binding site is contributed by 479–486 (GATGSGKS). The active site involves E593. A binds EsxB region spans residues 721-1315 (RPQVVEQPQP…RLIQTAYRES (595 aa)). Residues 834–839 (QTGKST), T1031, 1119–1124 (ECGKSN), Q1293, and 1310–1311 (TA) each bind ATP. Residues 1099-1282 (LSPVYLDFNT…MSGNKDEGIL (184 aa)) form the FtsK 3 domain.

The cytosolic domain can form homodimers. Binds EsxB, which leads to multimerization, however EsxA disassembles the multimers, possibly by making EccC-EsxA-EsxB trimers instead of EccC-EsxB-EsxB-EccC tetramers. Forms a complex with EsxA and EsxB, probably wholly mediated by EsxB.

It localises to the cell membrane. With respect to regulation, esxB binding to the third FtsK domain causes multimerization; a subsequent unknown step relieves the allosteric inhibition of linker 2 on FtsK domain 1, activating the ATPase activity; a mutant EsxB ('Ala-98') does not cause multimers to form. Functionally, part of the ESX specialized secretion system, which exports proteins from the cell including EsxA (ESAT-6) and EsxB (CFP-10). Has weak intrinsic ATPase activity; probably only the first FtsK domain can hydrolyze ATP. Might be the translocase subunit. The protein is ESX secretion system protein EccC of Thermomonospora curvata (strain ATCC 19995 / DSM 43183 / JCM 3096 / KCTC 9072 / NBRC 15933 / NCIMB 10081 / Henssen B9).